Here is a 148-residue protein sequence, read N- to C-terminus: Thioredoxin H8 (148 aa).

The Thioredoxin domain maps to 1 to 145 (MGANVSTPDQ…LERKLNKYTQ (145 aa)). Residues cysteine 71 and cysteine 74 each act as nucleophile in the active site. A disulfide bridge links cysteine 71 with cysteine 74.

This sequence belongs to the thioredoxin family. Plant H-type subfamily.

Its subcellular location is the cytoplasm. Probable thiol-disulfide oxidoreductase that may be involved in the redox regulation of a number of cytosolic enzymes. This chain is Thioredoxin H8 (TRX8), found in Arabidopsis thaliana (Mouse-ear cress).